We begin with the raw amino-acid sequence, 449 residues long: Chromosomal replication initiator protein DnaA (449 aa).

A domain I, interacts with DnaA modulators region spans residues 1–71 (MPSSLWKHCL…LLSHYSSGRI (71 aa)). The segment at 71–112 (IEKALLEVGSCSLQPQPHIQAVELTSKSARSSSRVVDRIPES) is domain II. The segment at 113 to 329 (RLNKNYTFDS…GALRRVIAYS (217 aa)) is domain III, AAA+ region. ATP-binding residues include glycine 157, glycine 159, lysine 160, and threonine 161. The segment at 330–449 (RFTHRPITME…YHNLLKKLST (120 aa)) is domain IV, binds dsDNA.

It belongs to the DnaA family. As to quaternary structure, oligomerizes as a right-handed, spiral filament on DNA at oriC.

It localises to the cytoplasm. In terms of biological role, plays an essential role in the initiation and regulation of chromosomal replication. ATP-DnaA binds to the origin of replication (oriC) to initiate formation of the DNA replication initiation complex once per cell cycle. Binds the DnaA box (a 9 base pair repeat at the origin) and separates the double-stranded (ds)DNA. Forms a right-handed helical filament on oriC DNA; dsDNA binds to the exterior of the filament while single-stranded (ss)DNA is stabiized in the filament's interior. The ATP-DnaA-oriC complex binds and stabilizes one strand of the AT-rich DNA unwinding element (DUE), permitting loading of DNA polymerase. After initiation quickly degrades to an ADP-DnaA complex that is not apt for DNA replication. Binds acidic phospholipids. In Nitrosococcus oceani (strain ATCC 19707 / BCRC 17464 / JCM 30415 / NCIMB 11848 / C-107), this protein is Chromosomal replication initiator protein DnaA.